Here is a 399-residue protein sequence, read N- to C-terminus: Acetate kinase (399 aa).

Residue N10 participates in Mg(2+) binding. K17 contributes to the ATP binding site. Residue R91 coordinates substrate. Residue D150 is the Proton donor/acceptor of the active site. Residues 210–214, 285–287, and 333–337 each bind ATP; these read HLGNG, DFR, and GIGEN. E387 is a binding site for Mg(2+).

This sequence belongs to the acetokinase family. Homodimer. The cofactor is Mg(2+). Requires Mn(2+) as cofactor.

Its subcellular location is the cytoplasm. It catalyses the reaction acetate + ATP = acetyl phosphate + ADP. It participates in metabolic intermediate biosynthesis; acetyl-CoA biosynthesis; acetyl-CoA from acetate: step 1/2. Catalyzes the formation of acetyl phosphate from acetate and ATP. Can also catalyze the reverse reaction. This is Acetate kinase from Wigglesworthia glossinidia brevipalpis.